We begin with the raw amino-acid sequence, 289 residues long: Diaminopimelate epimerase (289 aa).

Substrate is bound by residues N11 and N78. Residue C87 is the Proton donor of the active site. Residues 88–89, N163, N199, and 217–218 contribute to the substrate site; these read GN and ER. C226 acts as the Proton acceptor in catalysis. Substrate is bound at residue 227 to 228; sequence GT.

Belongs to the diaminopimelate epimerase family. In terms of assembly, homodimer.

The protein resides in the cytoplasm. The enzyme catalyses (2S,6S)-2,6-diaminopimelate = meso-2,6-diaminopimelate. It functions in the pathway amino-acid biosynthesis; L-lysine biosynthesis via DAP pathway; DL-2,6-diaminopimelate from LL-2,6-diaminopimelate: step 1/1. Catalyzes the stereoinversion of LL-2,6-diaminopimelate (L,L-DAP) to meso-diaminopimelate (meso-DAP), a precursor of L-lysine and an essential component of the bacterial peptidoglycan. This chain is Diaminopimelate epimerase, found in Rhodococcus opacus (strain B4).